Consider the following 269-residue polypeptide: tRNA uridine(34) hydroxylase (269 aa).

A Rhodanese domain is found at 121–214 (SQPDVLVIDT…YLERTHNKNG (94 aa)). Catalysis depends on cysteine 174, which acts as the Cysteine persulfide intermediate.

This sequence belongs to the TrhO family.

It carries out the reaction uridine(34) in tRNA + AH2 + O2 = 5-hydroxyuridine(34) in tRNA + A + H2O. Its function is as follows. Catalyzes oxygen-dependent 5-hydroxyuridine (ho5U) modification at position 34 in tRNAs. This Wolbachia sp. subsp. Brugia malayi (strain TRS) protein is tRNA uridine(34) hydroxylase.